Reading from the N-terminus, the 351-residue chain is Alanine racemase (351 aa).

Catalysis depends on Lys35, which acts as the Proton acceptor; specific for D-alanine. Residue Lys35 is modified to N6-(pyridoxal phosphate)lysine. Arg127 provides a ligand contact to substrate. Catalysis depends on Tyr247, which acts as the Proton acceptor; specific for L-alanine. A substrate-binding site is contributed by Met295.

Belongs to the alanine racemase family. The cofactor is pyridoxal 5'-phosphate.

It catalyses the reaction L-alanine = D-alanine. It functions in the pathway amino-acid biosynthesis; D-alanine biosynthesis; D-alanine from L-alanine: step 1/1. Its function is as follows. Catalyzes the interconversion of L-alanine and D-alanine. May also act on other amino acids. This Vesicomyosocius okutanii subsp. Calyptogena okutanii (strain HA) protein is Alanine racemase (alr).